The primary structure comprises 730 residues: Ribosomal RNA large subunit methyltransferase K/L (730 aa).

The region spanning 46 to 157 is the THUMP domain; that stretch reads TAYRLCLWSR…RGEAILSLDL (112 aa). The span at 399–408 shows a compositional bias: basic and acidic residues; the sequence is AAVEEGEPRR. The segment at 399-418 is disordered; that stretch reads AAVEEGEPRRQAPVASEPAR.

This sequence belongs to the methyltransferase superfamily. RlmKL family.

It is found in the cytoplasm. It carries out the reaction guanosine(2445) in 23S rRNA + S-adenosyl-L-methionine = N(2)-methylguanosine(2445) in 23S rRNA + S-adenosyl-L-homocysteine + H(+). The catalysed reaction is guanosine(2069) in 23S rRNA + S-adenosyl-L-methionine = N(2)-methylguanosine(2069) in 23S rRNA + S-adenosyl-L-homocysteine + H(+). Functionally, specifically methylates the guanine in position 2445 (m2G2445) and the guanine in position 2069 (m7G2069) of 23S rRNA. This Pseudomonas entomophila (strain L48) protein is Ribosomal RNA large subunit methyltransferase K/L.